A 709-amino-acid chain; its full sequence is Potassium-transporting ATPase ATP-binding subunit (709 aa).

4 consecutive transmembrane segments (helical) span residues 55 to 75, 86 to 106, 236 to 256, and 269 to 289; these read VMLVVLVGAVITTLAFLRDLA, GLVAAFLWFTVLFANFAEAMA, IALNILLAGLTIIFLLAVVTL, and VVVLVALLVCLIPTTIGALLS. The active-site 4-aspartylphosphate intermediate is Asp324. ATP contacts are provided by residues Asp361, Glu365, 395 to 402, and Lys417; that span reads FTAETRMS. Asp545 and Asp549 together coordinate Mg(2+). 3 consecutive transmembrane segments (helical) span residues 615-635, 643-663, and 688-708; these read FAIIPAMFVGLYPVLDKLNVM, AILSAVIFNALVIVALIPLAL, and GLVVPFIGIKLVDLVIVALGV.

This sequence belongs to the cation transport ATPase (P-type) (TC 3.A.3) family. Type IA subfamily. In terms of assembly, the system is composed of three essential subunits: KdpA, KdpB and KdpC.

It is found in the cell membrane. It carries out the reaction K(+)(out) + ATP + H2O = K(+)(in) + ADP + phosphate + H(+). Its function is as follows. Part of the high-affinity ATP-driven potassium transport (or Kdp) system, which catalyzes the hydrolysis of ATP coupled with the electrogenic transport of potassium into the cytoplasm. This subunit is responsible for energy coupling to the transport system and for the release of the potassium ions to the cytoplasm. This chain is Potassium-transporting ATPase ATP-binding subunit, found in Mycobacterium tuberculosis (strain ATCC 25618 / H37Rv).